We begin with the raw amino-acid sequence, 493 residues long: Glutamyl-tRNA(Gln) amidotransferase subunit A (493 aa).

Active-site charge relay system residues include K78 and S158. Residue S182 is the Acyl-ester intermediate of the active site.

Belongs to the amidase family. GatA subfamily. In terms of assembly, heterotrimer of A, B and C subunits.

It catalyses the reaction L-glutamyl-tRNA(Gln) + L-glutamine + ATP + H2O = L-glutaminyl-tRNA(Gln) + L-glutamate + ADP + phosphate + H(+). Its function is as follows. Allows the formation of correctly charged Gln-tRNA(Gln) through the transamidation of misacylated Glu-tRNA(Gln) in organisms which lack glutaminyl-tRNA synthetase. The reaction takes place in the presence of glutamine and ATP through an activated gamma-phospho-Glu-tRNA(Gln). In Rickettsia conorii (strain ATCC VR-613 / Malish 7), this protein is Glutamyl-tRNA(Gln) amidotransferase subunit A.